A 456-amino-acid polypeptide reads, in one-letter code: Exodeoxyribonuclease 7 large subunit (456 aa).

It belongs to the XseA family. Heterooligomer composed of large and small subunits.

It is found in the cytoplasm. The enzyme catalyses Exonucleolytic cleavage in either 5'- to 3'- or 3'- to 5'-direction to yield nucleoside 5'-phosphates.. Functionally, bidirectionally degrades single-stranded DNA into large acid-insoluble oligonucleotides, which are then degraded further into small acid-soluble oligonucleotides. The sequence is that of Exodeoxyribonuclease 7 large subunit from Shigella boydii serotype 4 (strain Sb227).